The sequence spans 44 residues: MQRTLGGTNRKRKRTSGFRARMRTPDGRNVIRARRKRGRHRLSV.

A disordered region spans residues 1 to 26 (MQRTLGGTNRKRKRTSGFRARMRTPD). The segment covering 9 to 22 (NRKRKRTSGFRARM) has biased composition (basic residues).

The protein belongs to the bacterial ribosomal protein bL34 family.

The protein is Large ribosomal subunit protein bL34 of Trichormus variabilis (strain ATCC 29413 / PCC 7937) (Anabaena variabilis).